A 300-amino-acid chain; its full sequence is 33 kDa chaperonin (300 aa).

Intrachain disulfides connect cysteine 247-cysteine 249 and cysteine 280-cysteine 283.

This sequence belongs to the HSP33 family. Under oxidizing conditions two disulfide bonds are formed involving the reactive cysteines. Under reducing conditions zinc is bound to the reactive cysteines and the protein is inactive.

Its subcellular location is the cytoplasm. Its function is as follows. Redox regulated molecular chaperone. Protects both thermally unfolding and oxidatively damaged proteins from irreversible aggregation. Plays an important role in the bacterial defense system toward oxidative stress. This Prochlorococcus marinus subsp. pastoris (strain CCMP1986 / NIES-2087 / MED4) protein is 33 kDa chaperonin.